The following is a 143-amino-acid chain: Large ribosomal subunit protein uL13 (143 aa).

It belongs to the universal ribosomal protein uL13 family. Part of the 50S ribosomal subunit.

Functionally, this protein is one of the early assembly proteins of the 50S ribosomal subunit, although it is not seen to bind rRNA by itself. It is important during the early stages of 50S assembly. In Albidiferax ferrireducens (strain ATCC BAA-621 / DSM 15236 / T118) (Rhodoferax ferrireducens), this protein is Large ribosomal subunit protein uL13.